Here is a 641-residue protein sequence, read N- to C-terminus: MIFLKNICKNIGENAILKNVSLSIEKGEFVAIIGQSGSGKTSLLNIIGTLDTPSSGTYVFDEYEVTKLNNDEKARLRREKIGFIFQRYNLLSLLSAKENVSLPAVYAGKKLQERSQNAKKLLNDLELAHKLDSKPNELSGGQQQRVSIARALMNGGELILADEPTGALDSKSGIMVLEILQKLNAQGHTIVLVTHDPKIAAQAKRVIEIKDGEILSDTKKEKAQEKLTLKTMSKEKKTLTLLKNQAFECFKIAYSSILAHKLRSILTMLGIIIGIASVVCVVALGLGSQAKVLESIARLGTNTIEIRPGRGFGDLRSGKTRLNFSDLETLRSLEYLEAVDAHSNTSGVATYTNISLSARAEGVGVNNFAIEGLRIDAGRILNNDDVKNSTNVAVLDFNAKKNLFPDEKSENILGRVVLFNSQPFKIIGVLQKDTDKPIEDNVVRLYIPYTTLMNKLTGDRNLREIIVKVKDDVSSTLAENAIIRILEIKRGQKDFFTFNSDTFKQAITANKRTTTILTACVAVIALIVGGIGVMNIMLVSVSERTREIGIRMAIGARREDIMMQFLIEAVMICTIGAILGVILSIFVIFAFNTLSTDFPMILNAYSVLLGLLSSMFIGVVFGFFPARNAANLNPISALSKE.

One can recognise an ABC transporter domain in the interval 2–236; that stretch reads IFLKNICKNI…LTLKTMSKEK (235 aa). Residue 34 to 41 participates in ATP binding; the sequence is GQSGSGKT. A run of 4 helical transmembrane segments spans residues 265–285, 519–539, 571–591, and 604–624; these read ILTM…VALG, ACVA…IMLV, MICT…IFAF, and AYSV…FGFF.

The protein belongs to the ABC transporter superfamily. Macrolide exporter (TC 3.A.1.122) family. Homodimer.

It is found in the cell inner membrane. In terms of biological role, non-canonical ABC transporter that contains transmembrane domains (TMD), which form a pore in the inner membrane, and an ATP-binding domain (NBD), which is responsible for energy generation. Confers resistance against macrolides. This is Macrolide export ATP-binding/permease protein MacB from Campylobacter jejuni subsp. jejuni serotype O:23/36 (strain 81-176).